The sequence spans 135 residues: Large ribosomal subunit protein bL17 (135 aa).

This sequence belongs to the bacterial ribosomal protein bL17 family. In terms of assembly, part of the 50S ribosomal subunit. Contacts protein L32.

The chain is Large ribosomal subunit protein bL17 from Listeria monocytogenes serotype 4b (strain CLIP80459).